The sequence spans 292 residues: AKT-interacting protein (292 aa).

A compositionally biased stretch (polar residues) spans 1–11; the sequence is MNPLWSMSSGS. The segment at 1-64 is disordered; the sequence is MNPLWSMSSG…SPAPAAQSTN (64 aa). Residues 14–23 are compositionally biased toward basic and acidic residues; the sequence is KRAEGEEKTL. S30 is subject to Phosphoserine. Residues 74–222 form the UBC core domain; it reads YLEYSLLAEF…VVDSVKVCTA (149 aa).

This sequence belongs to the ubiquitin-conjugating enzyme family. FTS subfamily. As to quaternary structure, component of the FTS/Hook/FHIP complex (FHF complex), composed of AKTIP/FTS, FHIP1B, and one or more members of the Hook family of proteins HOOK1, HOOK2, and HOOK3. Interacts directly with HOOK1, HOOK2 and HOOK3. The FHF complex associates with the homotypic vesicular sorting complex (the HOPS complex). Also interacts with AKT1. May interact with FHIP1A.

It localises to the cytoplasm. The protein localises to the cell membrane. Its function is as follows. Component of the FTS/Hook/FHIP complex (FHF complex). The FHF complex may function to promote vesicle trafficking and/or fusion via the homotypic vesicular protein sorting complex (the HOPS complex). Regulates apoptosis by enhancing phosphorylation and activation of AKT1. Increases release of TNFSF6 via the AKT1/GSK3B/NFATC1 signaling cascade. FHF complex promotes the distribution of AP-4 complex to the perinuclear area of the cell. This chain is AKT-interacting protein (Aktip), found in Rattus norvegicus (Rat).